The sequence spans 220 residues: Translation initiation factor 6 (220 aa).

Belongs to the eIF-6 family.

Binds to the 50S ribosomal subunit and prevents its association with the 30S ribosomal subunit to form the 70S initiation complex. The chain is Translation initiation factor 6 from Pyrobaculum aerophilum (strain ATCC 51768 / DSM 7523 / JCM 9630 / CIP 104966 / NBRC 100827 / IM2).